The chain runs to 559 residues: Formate--tetrahydrofolate ligase (559 aa).

Thr-67–Ser-74 contributes to the ATP binding site.

This sequence belongs to the formate--tetrahydrofolate ligase family.

The enzyme catalyses (6S)-5,6,7,8-tetrahydrofolate + formate + ATP = (6R)-10-formyltetrahydrofolate + ADP + phosphate. The protein operates within one-carbon metabolism; tetrahydrofolate interconversion. This is Formate--tetrahydrofolate ligase from Lactobacillus delbrueckii subsp. bulgaricus (strain ATCC 11842 / DSM 20081 / BCRC 10696 / JCM 1002 / NBRC 13953 / NCIMB 11778 / NCTC 12712 / WDCM 00102 / Lb 14).